Consider the following 310-residue polypeptide: Proline iminopeptidase (310 aa).

Residues 33-290 (PVIFLHGGPG…RVVQAGHRAF (258 aa)) enclose the AB hydrolase-1 domain. Residue Ser107 is the Nucleophile of the active site. Residue Asp260 is part of the active site. His287 functions as the Proton donor in the catalytic mechanism.

This sequence belongs to the peptidase S33 family.

It localises to the cytoplasm. It carries out the reaction Release of N-terminal proline from a peptide.. Its function is as follows. Specifically catalyzes the removal of N-terminal proline residues from peptides. This chain is Proline iminopeptidase (pip), found in Neisseria meningitidis serogroup A / serotype 4A (strain DSM 15465 / Z2491).